Consider the following 150-residue polypeptide: Transcriptional regulator MraZ (150 aa).

SpoVT-AbrB domains lie at 6–52 and 80–126; these read EFFN…PYQE and AVEC…NRTK.

The protein belongs to the MraZ family. In terms of assembly, forms oligomers.

It is found in the cytoplasm. Its subcellular location is the nucleoid. This is Transcriptional regulator MraZ from Syntrophotalea carbinolica (strain DSM 2380 / NBRC 103641 / GraBd1) (Pelobacter carbinolicus).